The sequence spans 68 residues: MARVTVDDCLKRIPNRFQMTLAAAHRARQLANGATPLVDPEKHKPTVVALKEMGAGKVGLEVLNRGQA.

The protein belongs to the RNA polymerase subunit omega family. The RNAP catalytic core consists of 2 alpha, 1 beta, 1 beta' and 1 omega subunit. When a sigma factor is associated with the core the holoenzyme is formed, which can initiate transcription.

The enzyme catalyses RNA(n) + a ribonucleoside 5'-triphosphate = RNA(n+1) + diphosphate. Functionally, promotes RNA polymerase assembly. Latches the N- and C-terminal regions of the beta' subunit thereby facilitating its interaction with the beta and alpha subunits. This chain is DNA-directed RNA polymerase subunit omega, found in Dechloromonas aromatica (strain RCB).